Reading from the N-terminus, the 438-residue chain is Protein translocase subunit SecY (438 aa).

A run of 10 helical transmembrane segments spans residues 18–38, 76–96, 121–141, 154–174, 177–197, 212–232, 269–289, 315–335, 375–395, and 398–418; these read ILFT…PSPG, VGVM…VVIP, IALA…GGLL, IFSL…VMWM, LITE…GIAA, GVIF…VVFV, VIPV…TQLV, PVYI…YVSV, LPGS…LQIG, and GEVQ…GVGL.

It belongs to the SecY/SEC61-alpha family. As to quaternary structure, component of the Sec protein translocase complex. Heterotrimer consisting of SecY, SecE and SecG subunits. The heterotrimers can form oligomers, although 1 heterotrimer is thought to be able to translocate proteins. Interacts with the ribosome. Interacts with SecDF, and other proteins may be involved. Interacts with SecA.

The protein resides in the cell membrane. In terms of biological role, the central subunit of the protein translocation channel SecYEG. Consists of two halves formed by TMs 1-5 and 6-10. These two domains form a lateral gate at the front which open onto the bilayer between TMs 2 and 7, and are clamped together by SecE at the back. The channel is closed by both a pore ring composed of hydrophobic SecY resides and a short helix (helix 2A) on the extracellular side of the membrane which forms a plug. The plug probably moves laterally to allow the channel to open. The ring and the pore may move independently. The polypeptide is Protein translocase subunit SecY (Mycobacterium leprae (strain TN)).